Consider the following 470-residue polypeptide: Minor capsid protein L2 (470 aa).

The Nuclear localization signal motif lies at 1 to 12 (MVSHRAARRKRA). Cysteine 21 and cysteine 27 are oxidised to a cystine. The Nuclear localization signal motif lies at 451-459 (FFLKKRKRI).

The protein belongs to the papillomaviridae L2 protein family. Interacts with major capsid protein L1. Interacts with E2; this interaction inhibits E2 transcriptional activity but not the DNA replication function E2. Interacts with host GADD45GIP1. Interacts with host HSPA8; this interaction is required for L2 nuclear translocation. Interacts with host importins KPNB2 and KPNB3. Forms a complex with importin alpha2-beta1 heterodimers via interaction with the importin alpha2 adapter. Interacts with host DYNLT1; this interaction is essential for virus intracellular transport during entry. Interacts (via C-terminus) with host retromer subunits VPS35 and VPS29. Highly phosphorylated.

Its subcellular location is the virion. The protein resides in the host nucleus. It is found in the host early endosome. It localises to the host Golgi apparatus. Its function is as follows. Minor protein of the capsid that localizes along the inner surface of the virion, within the central cavities beneath the L1 pentamers. Plays a role in capsid stabilization through interaction with the major capsid protein L1. Once the virion enters the host cell, L2 escorts the genomic DNA into the nucleus by promoting escape from the endosomal compartments and traffic through the host Golgi network. Mechanistically, the C-terminus of L2 possesses a cell-penetrating peptide that protudes from the host endosome, interacts with host cytoplasmic retromer cargo and thereby mediates the capsid delivery to the host trans-Golgi network. Plays a role through its interaction with host dynein in the intracellular microtubule-dependent transport of viral capsid toward the nucleus. Mediates the viral genome import into the nucleus through binding to host importins. Once within the nucleus, L2 localizes viral genomes to host PML bodies in order to activate early gene expression for establishment of infection. Later on, promotes late gene expression by interacting with the viral E2 protein and by inhibiting its transcriptional activation functions. During virion assembly, encapsidates the genome by direct interaction with the viral DNA. This chain is Minor capsid protein L2, found in Human papillomavirus 39.